The following is a 246-amino-acid chain: O-antigen export system ATP-binding protein RfbB (246 aa).

Residues 22-246 form the ABC transporter domain; sequence SGIKDLIFHP…IIELYKQAMA (225 aa). Residue 63-70 coordinates ATP; it reads GRNGAGKS.

This sequence belongs to the ABC transporter superfamily.

It localises to the cell inner membrane. In terms of biological role, may form an ATP-driven O-antigen export apparatus, in association with RfbA. In Klebsiella pneumoniae, this protein is O-antigen export system ATP-binding protein RfbB (rfbB).